Here is a 74-residue protein sequence, read N- to C-terminus: Anionic peptide clone 10 (74 aa).

Residues 1-24 (MVSKSLIVLLLVSVLVSTFFTTEA) form the signal peptide.

This sequence belongs to the non-disulfide-bridged peptide (NDBP) superfamily. Long chain multifunctional peptide (group 2) family. In terms of tissue distribution, expressed by the venom gland.

It is found in the secreted. May be an antimicrobial peptide. This chain is Anionic peptide clone 10, found in Tityus costatus (Brazilian scorpion).